Here is a 208-residue protein sequence, read N- to C-terminus: N-(5'-phosphoribosyl)anthranilate isomerase (208 aa).

It belongs to the TrpF family.

The catalysed reaction is N-(5-phospho-beta-D-ribosyl)anthranilate = 1-(2-carboxyphenylamino)-1-deoxy-D-ribulose 5-phosphate. It participates in amino-acid biosynthesis; L-tryptophan biosynthesis; L-tryptophan from chorismate: step 3/5. This chain is N-(5'-phosphoribosyl)anthranilate isomerase, found in Neisseria meningitidis serogroup C / serotype 2a (strain ATCC 700532 / DSM 15464 / FAM18).